Consider the following 247-residue polypeptide: tRNA (guanine-N(1)-)-methyltransferase (247 aa).

Residues glycine 113 and 133–138 (IGDFVM) contribute to the S-adenosyl-L-methionine site.

This sequence belongs to the RNA methyltransferase TrmD family. Homodimer.

The protein localises to the cytoplasm. The catalysed reaction is guanosine(37) in tRNA + S-adenosyl-L-methionine = N(1)-methylguanosine(37) in tRNA + S-adenosyl-L-homocysteine + H(+). In terms of biological role, specifically methylates guanosine-37 in various tRNAs. The chain is tRNA (guanine-N(1)-)-methyltransferase from Vibrio campbellii (strain ATCC BAA-1116).